The primary structure comprises 393 residues: Dual specificity mitogen-activated protein kinase kinase 1 (393 aa).

Positions 1–27 (MPKKKPTPIQLNPAPDGSAVNGTSSAE) are disordered. In terms of domain architecture, Protein kinase spans 68–361 (FEKISELGAG…LKQLMVHAFI (294 aa)). Residues 74–82 (LGAGNGGVV), Lys-97, 143–146 (MEHM), and 150–153 (SLDQ) each bind ATP. Lys-97 contacts U0126. 144 to 146 (EHM) contributes to the K-252a binding site. The active-site Proton acceptor is Asp-190. ATP contacts are provided by residues 192 to 195 (KPSN) and Asp-208. Ser-194 is a binding site for K-252a. A U0126-binding site is contributed by 208-211 (DFGV). A phosphoserine; by BRAF and RAF1 mark is found at Ser-218 and Ser-222. The segment at 270–307 (ELELMFGCQVEGDAAETPPRPRTPGRPLSSYGMDSRPP) is RAF1-binding. At Thr-286 the chain carries Phosphothreonine. Position 292 is a phosphothreonine; by MAPK1 (Thr-292). A Phosphoserine; by PAK modification is found at Ser-298.

It belongs to the protein kinase superfamily. STE Ser/Thr protein kinase family. MAP kinase kinase subfamily. Found in a complex with at least BRAF, HRAS, MAP2K1, MAPK3/ERK1 and RGS14. Forms a heterodimer with MAP2K2/MEK2. Forms heterodimers with KSR2 which further dimerize to form tetramers. Interacts with KSR1 or KSR2 and BRAF; the interaction with KSR1 or KSR2 mediates KSR1-BRAF or KSR2-BRAF dimerization. Interacts with ARBB2, LAMTOR3 and RAF1. Interacts with MAPK1/ERK2. Interacts with MORG1. Interacts with PPARG. Interacts with isoform 1 of VRK2. Interacts with SGK1. Interacts with BIRC6/bruce. Interacts with KAT7; the interaction promotes KAT7 phosphorylation. Interacts with RAF1 and NEK10; the interaction is required for ERK1/2-signaling pathway activation in response to UV irradiation. Interacts with TRAF3IP3. Interacts with MOS. As to quaternary structure, (Microbial infection) Interacts with Yersinia YopJ. Phosphorylation at Ser-218 and Ser-222 by MAP kinase kinase kinases (BRAF or MEKK1) positively regulates kinase activity. Also phosphorylated at Thr-292 by MAPK1/ERK2 and at Ser-298 by PAK. MAPK1/ERK2 phosphorylation of Thr-292 occurs in response to cellular adhesion and leads to inhibition of Ser-298 phosphorylation by PAK. Autophosphorylated at Ser-218 and Ser-222, autophosphosphorylation is promoted by NEK10 following UV irradiation. In terms of processing, (Microbial infection) Acetylation by Yersinia YopJ prevents phosphorylation and activation, thus blocking the MAPK signaling pathway. In terms of tissue distribution, widely expressed, with extremely low levels in brain.

The protein localises to the cytoplasm. It localises to the cytoskeleton. Its subcellular location is the microtubule organizing center. The protein resides in the centrosome. It is found in the spindle pole body. The protein localises to the nucleus. It localises to the membrane. The catalysed reaction is L-seryl-[protein] + ATP = O-phospho-L-seryl-[protein] + ADP + H(+). It carries out the reaction L-threonyl-[protein] + ATP = O-phospho-L-threonyl-[protein] + ADP + H(+). It catalyses the reaction L-tyrosyl-[protein] + ATP = O-phospho-L-tyrosyl-[protein] + ADP + H(+). With respect to regulation, ras proteins such as HRAS mediate the activation of RAF proteins such as RAF1 or BRAF which in turn activate extracellular signal-regulated kinases (ERK) through MAPK (mitogen-activated protein kinases) and ERK kinases MAP2K1/MEK1 and MAP2K2/MEK2. Activation occurs through phosphorylation of Ser-218 and Ser-222. MAP2K1/MEK1 binds KSR1 or KSR2 releasing the inhibitory intramolecular interaction between KSR1 or KSR2 protein kinase and N-terminal domains. This allows KSR1 or KSR2 dimerization with BRAF leading to BRAF activation and phosphorylation of MAP2K1. MAP2K1/MEK1 is also the target of negative feed-back regulation by its substrate kinases, such as MAPK1/ERK2. These phosphorylate MAP2K1/MEK1 on Thr-292, thereby facilitating dephosphorylation of the activating residues Ser-218 and Ser-222. Inhibited by serine/threonine phosphatase 2A. Many inhibitors have been identified including pyrrole derivatives, TAK-733 (one of a series of 8-methylpyrido[2,3-d]pyrimidine-4,7(3H,8H)-dione derivatives), CH4987655 and RDEA119/BAY 869766. In terms of biological role, dual specificity protein kinase which acts as an essential component of the MAP kinase signal transduction pathway. Binding of extracellular ligands such as growth factors, cytokines and hormones to their cell-surface receptors activates RAS and this initiates RAF1 activation. RAF1 then further activates the dual-specificity protein kinases MAP2K1/MEK1 and MAP2K2/MEK2. Both MAP2K1/MEK1 and MAP2K2/MEK2 function specifically in the MAPK/ERK cascade, and catalyze the concomitant phosphorylation of a threonine and a tyrosine residue in a Thr-Glu-Tyr sequence located in the extracellular signal-regulated kinases MAPK3/ERK1 and MAPK1/ERK2, leading to their activation and further transduction of the signal within the MAPK/ERK cascade. Activates BRAF in a KSR1 or KSR2-dependent manner; by binding to KSR1 or KSR2 releases the inhibitory intramolecular interaction between KSR1 or KSR2 protein kinase and N-terminal domains which promotes KSR1 or KSR2-BRAF dimerization and BRAF activation. Depending on the cellular context, this pathway mediates diverse biological functions such as cell growth, adhesion, survival and differentiation, predominantly through the regulation of transcription, metabolism and cytoskeletal rearrangements. One target of the MAPK/ERK cascade is peroxisome proliferator-activated receptor gamma (PPARG), a nuclear receptor that promotes differentiation and apoptosis. MAP2K1/MEK1 has been shown to export PPARG from the nucleus. The MAPK/ERK cascade is also involved in the regulation of endosomal dynamics, including lysosome processing and endosome cycling through the perinuclear recycling compartment (PNRC), as well as in the fragmentation of the Golgi apparatus during mitosis. This chain is Dual specificity mitogen-activated protein kinase kinase 1, found in Homo sapiens (Human).